The chain runs to 416 residues: Adrenocortical dysplasia protein (416 aa).

Residues 11–13 carry the PWI motif; that stretch reads PWI. Residue Ser-25 is modified to Phosphoserine. Residues 156 to 245 are interaction with POT1; that stretch reads ESASSSAGLT…SSTGSSQKAR (90 aa). A compositionally biased stretch (polar residues) spans 234-251; that stretch reads ILSSTGSSQKARGTSASP. The segment at 234 to 306 is disordered; sequence ILSSTGSSQK…TSPPCNSTPS (73 aa). Low complexity predominate over residues 259 to 272; sequence SGASVSLLSALATS. The span at 273 to 292 shows a compositional bias: polar residues; it reads DPGQMDSSQSPPAVGSTSPR. Ser-313 and Ser-317 each carry phosphoserine. Residue Lys-345 forms a Glycyl lysine isopeptide (Lys-Gly) (interchain with G-Cter in SUMO2) linkage.

In terms of assembly, component of the shelterin complex (telosome) composed of TERF1, TERF2, TINF2, TERF2IP ACD and POT1. Forms heterodimers with POT1. Identified in a complex with POT1 and single-stranded telomeric DNA. Interacts with STN1 and TINF2. Ubiquitous.

It localises to the nucleus. The protein resides in the chromosome. It is found in the telomere. Its function is as follows. Component of the shelterin complex (telosome) that is involved in the regulation of telomere length and protection. Shelterin associates with arrays of double-stranded TTAGGG repeats added by telomerase and protects chromosome ends. Without its protective activity, telomeres are no longer hidden from the DNA damage surveillance and chromosome ends are inappropriately processed by DNA repair pathways. Promotes binding of POT1 to single-stranded telomeric DNA. Modulates the inhibitory effects of POT1 on telomere elongation. The ACD-POT1 heterodimer enhances telomere elongation by recruiting telomerase to telomeres and increasing its processivity. May play a role in organogenesis. This chain is Adrenocortical dysplasia protein, found in Mus musculus (Mouse).